Reading from the N-terminus, the 391-residue chain is Pyruvate dehydrogenase E1 component subunit beta-3, chloroplastic (391 aa).

Residues 1-35 (MATAAAASLQYALHGAASASAKPRSAAPGRSVRVV) constitute a chloroplast transit peptide. Glu127 is a thiamine diphosphate binding site. Ile180, Ala228, Ile229, and Asn233 together coordinate K(+).

As to quaternary structure, tetramer of 2 alpha and 2 beta subunits. The cofactor is thiamine diphosphate.

The protein resides in the plastid. It is found in the chloroplast. The enzyme catalyses N(6)-[(R)-lipoyl]-L-lysyl-[protein] + pyruvate + H(+) = N(6)-[(R)-S(8)-acetyldihydrolipoyl]-L-lysyl-[protein] + CO2. Functionally, the pyruvate dehydrogenase complex catalyzes the overall conversion of pyruvate to acetyl-CoA and CO(2). It contains multiple copies of three enzymatic components: pyruvate dehydrogenase (E1), dihydrolipoamide acetyltransferase (E2) and lipoamide dehydrogenase (E3). This is Pyruvate dehydrogenase E1 component subunit beta-3, chloroplastic from Oryza sativa subsp. japonica (Rice).